We begin with the raw amino-acid sequence, 418 residues long: Phosphoglycerate kinase (418 aa).

Residues Val-23, Asp-24, Phe-25, Asn-26, Gln-39, Arg-40, Ser-63, His-64, Gly-66, Arg-67, Leu-122, Arg-123, His-170, and Arg-171 each contribute to the (2R)-3-phosphoglycerate site. Residue Gly-214 coordinates ADP. Residue Gly-214 participates in CDP binding. Residues Ala-215 and Lys-216 each coordinate AMP. Ala-215 contacts ATP. Position 215 (Ala-215) interacts with Mg(2+). Asp-219 serves as a coordination point for CDP. A Mg(2+)-binding site is contributed by Asp-219. AMP is bound at residue Lys-220. Lys-220 is a binding site for ATP. Gly-238 is a binding site for ADP. Residue Gly-238 participates in CDP binding. Residues Gly-239 and Gly-313 each contribute to the AMP site. ATP-binding residues include Gly-239 and Gly-313. Residues Gly-338, Ala-340, and Phe-343 each contribute to the CDP site. Phe-343 lines the ADP pocket. Glu-344 contributes to the AMP binding site. The ATP site is built by Glu-344, Asp-375, and Thr-376. Asp-375 provides a ligand contact to Mg(2+).

It belongs to the phosphoglycerate kinase family. In terms of assembly, monomer. It depends on Mg(2+) as a cofactor.

It localises to the cytoplasm. The protein resides in the mitochondrion. It carries out the reaction (2R)-3-phosphoglycerate + ATP = (2R)-3-phospho-glyceroyl phosphate + ADP. The protein operates within carbohydrate degradation; glycolysis; pyruvate from D-glyceraldehyde 3-phosphate: step 2/5. Functionally, catalyzes one of the two ATP producing reactions in the glycolytic pathway via the reversible conversion of 1,3-diphosphoglycerate to 3-phosphoglycerate. Both L- and D- forms of purine and pyrimidine nucleotides can be used as substrates, but the activity is much lower on pyrimidines. Negatively regulates the biosynthesis of acetyl-CoA from pyruvate in the mitochondrion. The protein is Phosphoglycerate kinase (pgk-1) of Neurospora crassa (strain ATCC 24698 / 74-OR23-1A / CBS 708.71 / DSM 1257 / FGSC 987).